Reading from the N-terminus, the 530-residue chain is Hyccin 2 (530 aa).

Phosphothreonine occurs at positions 30 and 306. S321 and S341 each carry phosphoserine. The segment at 328–410 (RREGAEGVNG…DSVVRKQYVQ (83 aa)) is disordered. A compositionally biased stretch (polar residues) spans 353-373 (SGASLSSQPIGTKPSSSSQRG). Phosphoserine is present on residues S430, S442, S444, and S491. The disordered stretch occupies residues 502–530 (EGKELLSPGAPLTKQSRSPSFNMQLISQV). Residues 514-530 (TKQSRSPSFNMQLISQV) show a composition bias toward polar residues.

The protein belongs to the Hyccin family. Component of a phosphatidylinositol 4-kinase (PI4K) complex, composed of PI4KA, EFR3 (EFR3A or EFR3B), TTC7 (TTC7A or TTC7B) and HYCC (HYCC1 or HYCC2).

Its subcellular location is the cytoplasm. The protein localises to the cytosol. The protein resides in the cell membrane. Functionally, component of a complex required to localize phosphatidylinositol 4-kinase (PI4K) to the plasma membrane. The protein is Hyccin 2 of Homo sapiens (Human).